A 662-amino-acid polypeptide reads, in one-letter code: Cytochrome bo(3) ubiquinol oxidase subunit 1 (662 aa).

Topologically, residues 1–14 (MFGKLTFDAIPYHE) are extracellular. The chain crosses the membrane as a helical span at residues 15-35 (PIIMITYIAIILIALCIASTI). The Cytoplasmic segment spans residues 36-58 (TYYKKWKYLWYEWFTTVDHKKIS). A helical membrane pass occupies residues 59-79 (IMYGILAFVMLFRGFVDAILM). 3 residues coordinate a ubiquinone: Arg-71, Asp-75, and His-98. Topologically, residues 80 to 106 (RTQQVVASAGFKGFLPPHHYDQIFTAH) are extracellular. His-106 serves as a coordination point for heme b. A helical membrane pass occupies residues 107-127 (GVIMIFFVAMPLVIGLMNLVI). Residues 128–145 (PLQIGARDVAFPFLNNLS) are Cytoplasmic-facing. A helical membrane pass occupies residues 146–166 (FWLNVSSAVLLTLSLGIGEFA). The Extracellular portion of the chain corresponds to 167 to 189 (QTGWLAYPPLSGIKYSSGVGVDY). Trp-170 serves as a coordination point for heme b. Residues 190–210 (WIWSLQISGVGTTLTGINFLV) form a helical membrane-spanning segment. Residues 211–232 (TILKMRAPGMSFFKMPVFTWTS) are Cytoplasmic-facing. Residues 233–253 (LCTNILIVISFPVLTVTLVLL) traverse the membrane as a helical segment. Topologically, residues 254–277 (TLDRYFNFHFFTNDLGGNAMMYVN) are extracellular. Residues 278–298 (LIWIWGHPEVYILVLPVFGVF) form a helical membrane-spanning segment. His-284 contributes to the Cu(2+) binding site. Positions 284–288 (HPEVY) form a cross-link, 1'-histidyl-3'-tyrosine (His-Tyr). A Fe(II)-heme o-binding site is contributed by Tyr-288. The Cytoplasmic portion of the chain corresponds to 299-309 (SEVVATFSKKR). The helical transmembrane segment at 310–330 (LFGYVSLVWATLSITILSFIV) threads the bilayer. At 331–346 (WLHHFFTMGAGADVNT) the chain is on the extracellular side. Residues His-333 and His-334 each coordinate Cu(2+). Residues 347-367 (FFGITTMIIAIPTGVKIFNWL) form a helical membrane-spanning segment. Residues 368-380 (FTIYQGRVHMHSS) are Cytoplasmic-facing. Residues 381–401 (ILWTLGFLVTFSIGGMTGVLL) form a helical membrane-spanning segment. The Extracellular segment spans residues 402-413 (SVPPADFVLHNS). Fe(II)-heme o contacts are provided by His-411 and His-419. The helical transmembrane segment at 414–434 (LFLVAHFHNVIIGGVVFGCFA) threads the bilayer. His-421 lines the heme b pocket. Residues 435–456 (GINYWFPKLFGFVLNEIWGKRA) are Cytoplasmic-facing. The helical transmembrane segment at 457–477 (FWFWIIGFFLAFIPLYFLGLM) threads the bilayer. Topologically, residues 478–493 (GMTRRLSQNIDSEFHM) are extracellular. Positions 481 and 482 each coordinate heme b. Residues 494 to 514 (LLCIAAIGACFIGIGIICQVI) traverse the membrane as a helical segment. The Cytoplasmic segment spans residues 515-586 (QFFISIKERR…INSINYHDIH (72 aa)). A helical transmembrane segment spans residues 587–607 (MPKNTGLGFMISIFSLFFGFS). A topological domain (extracellular) is located at residue Ala-608. Residues 609–629 (VWHITWLCILSFLAIIISLFI) form a helical membrane-spanning segment. The Cytoplasmic portion of the chain corresponds to 630–662 (NSLNEDTEYTISAEEIKKIEHQYWKNIQKAGLK).

It belongs to the heme-copper respiratory oxidase family. As to quaternary structure, the cytochrome bo(3) ubiquinol oxidase complex is a heterooctamer of two A chains, two B chains, two C chains and two D chains. Requires Cu(2+) as cofactor. Heme b serves as cofactor. Fe(II)-heme o is required as a cofactor.

The protein resides in the cell membrane. It catalyses the reaction 2 a ubiquinol + O2 + n H(+)(in) = 2 a ubiquinone + 2 H2O + n H(+)(out). In terms of biological role, cytochrome bo(3) ubiquinol oxidase is the terminal enzyme in the aerobic respiratory chain. Catalyzes the four-electron reduction of O2 to water, using a ubiquinol as a membrane soluble electron donor for molecular oxygen reduction. Has proton pump activity across the membrane in addition to electron transfer, pumping 2 protons/electron and generating a proton motive force. All the redox centers of this enzyme complex are located within the largest subunit, subunit I. Protons are probably pumped via D- and K- channels found in this subunit. The protein is Cytochrome bo(3) ubiquinol oxidase subunit 1 (cyoB) of Buchnera aphidicola subsp. Acyrthosiphon pisum (strain APS) (Acyrthosiphon pisum symbiotic bacterium).